Here is a 166-residue protein sequence, read N- to C-terminus: MTKSFCSTGLRWLWLVVVVLIIDLGSKFLILQNFALGDTVPLFPSLNLHYARNYGAAFSFLADSGGWQRWFFAGIALGICLVLTVMMYRAKASQKLNNIAYALIIGGALGNLFDRLWHGFVVDMIDFYVGNWHFATFNLADSAICFGAAMIVLEGFLPNAAAKKQA.

3 helical membrane-spanning segments follow: residues 12–32 (WLWL…LILQ), 70–90 (WFFA…MYRA), and 102–122 (ALII…GFVV). Catalysis depends on residues Asp123 and Asp141. Residues 142–162 (SAICFGAAMIVLEGFLPNAAA) traverse the membrane as a helical segment.

This sequence belongs to the peptidase A8 family.

It localises to the cell inner membrane. The enzyme catalyses Release of signal peptides from bacterial membrane prolipoproteins. Hydrolyzes -Xaa-Yaa-Zaa-|-(S,diacylglyceryl)Cys-, in which Xaa is hydrophobic (preferably Leu), and Yaa (Ala or Ser) and Zaa (Gly or Ala) have small, neutral side chains.. It functions in the pathway protein modification; lipoprotein biosynthesis (signal peptide cleavage). Its function is as follows. This protein specifically catalyzes the removal of signal peptides from prolipoproteins. This Enterobacter sp. (strain 638) protein is Lipoprotein signal peptidase.